The following is a 144-amino-acid chain: Ribosomal RNA large subunit methyltransferase H (144 aa).

S-adenosyl-L-methionine is bound by residues Leu63, Gly92, and 111–116 (LSPMTF).

This sequence belongs to the RNA methyltransferase RlmH family. As to quaternary structure, homodimer.

The protein localises to the cytoplasm. It catalyses the reaction pseudouridine(1915) in 23S rRNA + S-adenosyl-L-methionine = N(3)-methylpseudouridine(1915) in 23S rRNA + S-adenosyl-L-homocysteine + H(+). Functionally, specifically methylates the pseudouridine at position 1915 (m3Psi1915) in 23S rRNA. In Synechococcus sp. (strain CC9605), this protein is Ribosomal RNA large subunit methyltransferase H.